Consider the following 391-residue polypeptide: Putative F-box protein At1g47730 (391 aa).

The segment covering 1–12 (MEQREEKTENIQ) has biased composition (basic and acidic residues). The disordered stretch occupies residues 1 to 25 (MEQREEKTENIQRKRSRGKSSSSSL). One can recognise an F-box domain in the interval 19–68 (KSSSSSLPLDLTSEIFSRLPAKSVVRFRCVSKLWSSITTAPYFTNSFETR).

In Arabidopsis thaliana (Mouse-ear cress), this protein is Putative F-box protein At1g47730.